We begin with the raw amino-acid sequence, 207 residues long: LexA repressor (207 aa).

Residues 28–48 (VREIGEAVGLASSSTVHGHLA) constitute a DNA-binding region (H-T-H motif). Catalysis depends on for autocatalytic cleavage activity residues Ser129 and Lys167.

Belongs to the peptidase S24 family. As to quaternary structure, homodimer.

It carries out the reaction Hydrolysis of Ala-|-Gly bond in repressor LexA.. Functionally, represses a number of genes involved in the response to DNA damage (SOS response), including recA and lexA. In the presence of single-stranded DNA, RecA interacts with LexA causing an autocatalytic cleavage which disrupts the DNA-binding part of LexA, leading to derepression of the SOS regulon and eventually DNA repair. In Brevibacillus brevis (strain 47 / JCM 6285 / NBRC 100599), this protein is LexA repressor.